Reading from the N-terminus, the 542-residue chain is Isocitrate lyase (542 aa).

Substrate is bound at residue 102 to 104 (SGW). Aspartate 170 is a binding site for Mg(2+). Cysteine 208 (proton acceptor) is an active-site residue. Substrate contacts are provided by residues 209–210 (GH), arginine 245, 428–432 (NLSPS), and threonine 462.

It belongs to the isocitrate lyase/PEP mutase superfamily. Isocitrate lyase family. In terms of assembly, homotetramer. The cofactor is Mg(2+).

It is found in the glyoxysome. The catalysed reaction is D-threo-isocitrate = glyoxylate + succinate. It carries out the reaction (2S,3R)-3-hydroxybutane-1,2,3-tricarboxylate = pyruvate + succinate. The protein operates within carbohydrate metabolism; glyoxylate cycle; (S)-malate from isocitrate: step 1/2. Functionally, catalyzes the formation of succinate and glyoxylate from isocitrate, a key step of the glyoxylate cycle, which operates as an anaplerotic route for replenishing the tricarboxylic acid cycle. Required for growth on ethanol or acetate, but dispensable when fermentable carbon sources are available. Also acts on 2-methylisocitrate. The sequence is that of Isocitrate lyase from Kluyveromyces lactis (strain ATCC 8585 / CBS 2359 / DSM 70799 / NBRC 1267 / NRRL Y-1140 / WM37) (Yeast).